The sequence spans 132 residues: Probable histone H2A.1 (132 aa).

Positions 1 to 22 (MAGRGKTLGSGSAKKATTRSSK) are disordered.

It belongs to the histone H2A family. The nucleosome is a histone octamer containing two molecules each of H2A, H2B, H3 and H4 assembled in one H3-H4 heterotetramer and two H2A-H2B heterodimers. The octamer wraps approximately 147 bp of DNA. In terms of processing, not ubiquitinated. In terms of tissue distribution, low level of expression; mainly in roots. Found in the root cap cells and in non dividing tissues of the plant, including the root elongation and maturation zones and the leaf veins.

It is found in the nucleus. It localises to the chromosome. In terms of biological role, core component of nucleosome. Nucleosomes wrap and compact DNA into chromatin, limiting DNA accessibility to the cellular machineries which require DNA as a template. Histones thereby play a central role in transcription regulation, DNA repair, DNA replication and chromosomal stability. DNA accessibility is regulated via a complex set of post-translational modifications of histones, also called histone code, and nucleosome remodeling. In Arabidopsis thaliana (Mouse-ear cress), this protein is Probable histone H2A.1.